Here is a 233-residue protein sequence, read N- to C-terminus: Small ribosomal subunit protein uS3 (233 aa).

The region spanning 39 to 107 (VRQYLTKELA…PAQINIAEVR (69 aa)) is the KH type-2 domain.

Belongs to the universal ribosomal protein uS3 family. Part of the 30S ribosomal subunit. Forms a tight complex with proteins S10 and S14.

In terms of biological role, binds the lower part of the 30S subunit head. Binds mRNA in the 70S ribosome, positioning it for translation. This is Small ribosomal subunit protein uS3 from Citrobacter koseri (strain ATCC BAA-895 / CDC 4225-83 / SGSC4696).